A 60-amino-acid chain; its full sequence is uncharacterized protein (60 aa).

This is an uncharacterized protein from Dryophytes versicolor (chameleon treefrog).